Reading from the N-terminus, the 213-residue chain is Dimethylamine corrinoid protein 3 (213 aa).

One can recognise a B12-binding N-terminal domain in the interval 1–91 (MADIEGLLHE…DLPAGAEKKL (91 aa)). Positions 92 to 213 (GVIVNGTVEG…AVAKAKELLL (122 aa)) constitute a B12-binding domain. A methylcob(III)alamin-binding site is contributed by histidine 104.

This sequence belongs to the methylamine corrinoid protein family.

Its pathway is one-carbon metabolism; methanogenesis from dimethylamine. In terms of biological role, acts as a methyl group carrier between MtbB and MtbA. This Methanosarcina acetivorans (strain ATCC 35395 / DSM 2834 / JCM 12185 / C2A) protein is Dimethylamine corrinoid protein 3 (mtbC3).